We begin with the raw amino-acid sequence, 141 residues long: 3-hydroxyacyl-[acyl-carrier-protein] dehydratase FabZ (141 aa).

His-49 is a catalytic residue.

The protein belongs to the thioester dehydratase family. FabZ subfamily.

Its subcellular location is the cytoplasm. It carries out the reaction a (3R)-hydroxyacyl-[ACP] = a (2E)-enoyl-[ACP] + H2O. Involved in unsaturated fatty acids biosynthesis. Catalyzes the dehydration of short chain beta-hydroxyacyl-ACPs and long chain saturated and unsaturated beta-hydroxyacyl-ACPs. This Fusobacterium nucleatum subsp. nucleatum (strain ATCC 25586 / DSM 15643 / BCRC 10681 / CIP 101130 / JCM 8532 / KCTC 2640 / LMG 13131 / VPI 4355) protein is 3-hydroxyacyl-[acyl-carrier-protein] dehydratase FabZ.